Reading from the N-terminus, the 341-residue chain is Holliday junction branch migration complex subunit RuvB (341 aa).

Residues 1–180 (MAKSHTLNPE…FGIQLRLDYY (180 aa)) are large ATPase domain (RuvB-L). 9 residues coordinate ATP: Leu-19, Arg-20, Gly-61, Lys-64, Thr-65, Thr-66, Arg-170, Tyr-180, and Arg-217. Thr-65 contacts Mg(2+). The small ATPAse domain (RuvB-S) stretch occupies residues 181–251 (NDEEMKEIVL…LCLKAFEKMG (71 aa)). Residues 254-341 (DLGLDGMDRQ…ENHGQDPTLF (88 aa)) are head domain (RuvB-H). The DNA site is built by Arg-309 and Arg-314.

The protein belongs to the RuvB family. In terms of assembly, homohexamer. Forms an RuvA(8)-RuvB(12)-Holliday junction (HJ) complex. HJ DNA is sandwiched between 2 RuvA tetramers; dsDNA enters through RuvA and exits via RuvB. An RuvB hexamer assembles on each DNA strand where it exits the tetramer. Each RuvB hexamer is contacted by two RuvA subunits (via domain III) on 2 adjacent RuvB subunits; this complex drives branch migration. In the full resolvosome a probable DNA-RuvA(4)-RuvB(12)-RuvC(2) complex forms which resolves the HJ.

The protein localises to the cytoplasm. It catalyses the reaction ATP + H2O = ADP + phosphate + H(+). Functionally, the RuvA-RuvB-RuvC complex processes Holliday junction (HJ) DNA during genetic recombination and DNA repair, while the RuvA-RuvB complex plays an important role in the rescue of blocked DNA replication forks via replication fork reversal (RFR). RuvA specifically binds to HJ cruciform DNA, conferring on it an open structure. The RuvB hexamer acts as an ATP-dependent pump, pulling dsDNA into and through the RuvAB complex. RuvB forms 2 homohexamers on either side of HJ DNA bound by 1 or 2 RuvA tetramers; 4 subunits per hexamer contact DNA at a time. Coordinated motions by a converter formed by DNA-disengaged RuvB subunits stimulates ATP hydrolysis and nucleotide exchange. Immobilization of the converter enables RuvB to convert the ATP-contained energy into a lever motion, pulling 2 nucleotides of DNA out of the RuvA tetramer per ATP hydrolyzed, thus driving DNA branch migration. The RuvB motors rotate together with the DNA substrate, which together with the progressing nucleotide cycle form the mechanistic basis for DNA recombination by continuous HJ branch migration. Branch migration allows RuvC to scan DNA until it finds its consensus sequence, where it cleaves and resolves cruciform DNA. The chain is Holliday junction branch migration complex subunit RuvB from Leptospira borgpetersenii serovar Hardjo-bovis (strain JB197).